Reading from the N-terminus, the 295-residue chain is Phosphoribosylaminoimidazole-succinocarboxamide synthase (295 aa).

This sequence belongs to the SAICAR synthetase family.

The enzyme catalyses 5-amino-1-(5-phospho-D-ribosyl)imidazole-4-carboxylate + L-aspartate + ATP = (2S)-2-[5-amino-1-(5-phospho-beta-D-ribosyl)imidazole-4-carboxamido]succinate + ADP + phosphate + 2 H(+). It participates in purine metabolism; IMP biosynthesis via de novo pathway; 5-amino-1-(5-phospho-D-ribosyl)imidazole-4-carboxamide from 5-amino-1-(5-phospho-D-ribosyl)imidazole-4-carboxylate: step 1/2. The chain is Phosphoribosylaminoimidazole-succinocarboxamide synthase from Corynebacterium ammoniagenes (Brevibacterium ammoniagenes).